The primary structure comprises 144 residues: Maximins 8/H7 (144 aa).

Residues 1–18 (MKFKYIVAVSFLIASAYA) form the signal peptide. Residues 19-43 (RSEENDEQSLSQRDVLEEESLREIR) constitute a propeptide that is removed on maturation. N70 is subject to Asparagine amide. Residues 74 to 123 (TAEDHEVMKRLEAVMRDLDSLDYPEEASERETRGFNQEEIANLFTKKEKR) constitute a propeptide that is removed on maturation. A Leucine amide modification is found at L143.

This sequence belongs to the bombinin family. As to expression, expressed by the skin glands.

It is found in the secreted. Its function is as follows. Maximin-8 shows antimicrobial activity against bacteria and against the fungus C.albicans. It has little hemolytic activity. Maximin-H7 shows antimicrobial activity against bacteria and against the fungus C.albicans. Shows strong hemolytic activity. The polypeptide is Maximins 8/H7 (Bombina maxima (Giant fire-bellied toad)).